The following is a 55-amino-acid chain: Large ribosomal subunit protein bL33 (55 aa).

It belongs to the bacterial ribosomal protein bL33 family.

In Gluconobacter oxydans (strain 621H) (Gluconobacter suboxydans), this protein is Large ribosomal subunit protein bL33.